We begin with the raw amino-acid sequence, 162 residues long: Caveolin-2 (162 aa).

Residues 1 to 86 (MGLETEKADV…FEISKYVMYK (86 aa)) are Cytoplasmic-facing. Y19 bears the Phosphotyrosine; by SRC mark. Phosphoserine is present on residues S20 and S23. Position 27 is a phosphotyrosine; by SRC (Y27). At S36 the chain carries Phosphoserine. Positions 87–107 (FLTVFLAIPLAFIAGILFATL) form an intramembrane region, helical. Topologically, residues 108-162 (SCLHIWILMPFVKTCLMVLPSVQTIWKSVTDVFIAPLCTSVGRSFSSVSLQLSQD) are cytoplasmic.

This sequence belongs to the caveolin family. As to quaternary structure, monomer or homodimer. Interacts with CAV1; the interaction forms a stable heterooligomeric complex that is required for targeting to lipid rafts and for caveolae formation. Tyrosine phosphorylated forms do not form heterooligomers with the Tyr-19-phosphorylated form existing as a monomer or dimer, and the Tyr-27-form as a monomer only. Interacts (tyrosine phosphorylated form) with the SH2 domain-containing proteins, RASA1, NCK1 and SRC. Interacts (tyrosine phosphorylated form) with INSR, the interaction (Tyr-27-phosphorylated form) is increased on insulin stimulation. Interacts (Tyr-19 phosphorylated form) with MAPK1 (phosphorylated form); the interaction, promoted by insulin, leads to nuclear location and MAPK1 activation. Interacts with STAT3; the interaction is increased on insulin-induced tyrosine phosphorylation leading to STAT activation. In terms of processing, phosphorylated on serine and tyrosine residues. CAV1 promotes phosphorylation on Ser-23 which then targets the complex to the plasma membrane, lipid rafts and caveolae. Phosphorylation on Ser-36 appears to modulate mitosis in endothelial cells. Phosphorylation on both Tyr-19 and Tyr-27 is required for insulin-induced 'Ser-727' phosphorylation of STAT3 and its activation. Phosphorylation on Tyr-19 is required for insulin-induced phosphorylation of MAPK1 and DNA binding of STAT3. Tyrosine phosphorylation is induced by both EGF and insulin (By. similarity).

It is found in the nucleus. Its subcellular location is the cytoplasm. It localises to the golgi apparatus membrane. The protein resides in the cell membrane. The protein localises to the membrane. It is found in the caveola. Its function is as follows. May act as a scaffolding protein within caveolar membranes. Interacts directly with G-protein alpha subunits and can functionally regulate their activity. Acts as an accessory protein in conjunction with CAV1 in targeting to lipid rafts and driving caveolae formation. The Ser-36 phosphorylated form has a role in modulating mitosis in endothelial cells. Positive regulator of cellular mitogenesis of the MAPK signaling pathway. Required for the insulin-stimulated nuclear translocation and activation of MAPK1 and STAT3, and the subsequent regulation of cell cycle progression. The polypeptide is Caveolin-2 (CAV2) (Chlorocebus aethiops (Green monkey)).